A 277-amino-acid polypeptide reads, in one-letter code: Phosphoenolpyruvate synthase regulatory protein (277 aa).

Residue 157–164 coordinates ADP; sequence GVSRCGKT.

This sequence belongs to the pyruvate, phosphate/water dikinase regulatory protein family. PSRP subfamily.

It catalyses the reaction [pyruvate, water dikinase] + ADP = [pyruvate, water dikinase]-phosphate + AMP + H(+). The enzyme catalyses [pyruvate, water dikinase]-phosphate + phosphate + H(+) = [pyruvate, water dikinase] + diphosphate. Bifunctional serine/threonine kinase and phosphorylase involved in the regulation of the phosphoenolpyruvate synthase (PEPS) by catalyzing its phosphorylation/dephosphorylation. The chain is Phosphoenolpyruvate synthase regulatory protein from Escherichia fergusonii (strain ATCC 35469 / DSM 13698 / CCUG 18766 / IAM 14443 / JCM 21226 / LMG 7866 / NBRC 102419 / NCTC 12128 / CDC 0568-73).